A 45-amino-acid polypeptide reads, in one-letter code: Photosystem II reaction center protein K (45 aa).

A propeptide spanning residues 1–8 (MEGILFLA) is cleaved from the precursor. The chain crosses the membrane as a helical span at residues 24-44 (APVIPVFFLLLAFVWQAAVGF).

This sequence belongs to the PsbK family. As to quaternary structure, PSII is composed of 1 copy each of membrane proteins PsbA, PsbB, PsbC, PsbD, PsbE, PsbF, PsbH, PsbI, PsbJ, PsbK, PsbL, PsbM, PsbT, PsbX, PsbY, PsbZ, Psb30/Ycf12, at least 3 peripheral proteins of the oxygen-evolving complex and a large number of cofactors. It forms dimeric complexes.

It is found in the plastid. The protein localises to the chloroplast thylakoid membrane. In terms of biological role, one of the components of the core complex of photosystem II (PSII). PSII is a light-driven water:plastoquinone oxidoreductase that uses light energy to abstract electrons from H(2)O, generating O(2) and a proton gradient subsequently used for ATP formation. It consists of a core antenna complex that captures photons, and an electron transfer chain that converts photonic excitation into a charge separation. The protein is Photosystem II reaction center protein K of Guillardia theta (Cryptophyte).